Consider the following 485-residue polypeptide: Skb1 localization factor 1 (485 aa).

The tract at residues 1–200 is sufficient for interaction with Skb1; it reads MSSIIQNPIE…VDDSDLTPHT (200 aa). 3 disordered regions span residues 117-230, 286-416, and 446-466; these read NAAN…MSRN, ETQH…LRRS, and TTQE…KPEK. Residues 171 to 182 show a composition bias toward polar residues; it reads SRSSRYSKTSDL. The segment covering 189-198 has biased composition (basic and acidic residues); sequence RFVDDSDLTP. 2 stretches are compositionally biased toward polar residues: residues 218–230 and 341–363; these read GRSS…MSRN and VGSS…QQDS. The residue at position 222 (Ser222) is a Phosphoserine. Basic and acidic residues predominate over residues 371 to 393; the sequence is SERSYRRVRDQYLSKPRLSDKNR. Positions 394–416 are enriched in polar residues; that stretch reads YSTFSEFPGQGTPSASQSNLRRS. Residues 447-464 are compositionally biased toward basic and acidic residues; sequence TQERKPVVKPDSIKTVKP. Residues 451–485 are required and sufficient for plasma membrane anchoring; lysine-rich, may bind to anionic lipids in the plasma membrane; that stretch reads KPVVKPDSIKTVKPEKKKSKGFFKKLMHKISHIFD. Ser458 is subject to Phosphoserine.

In terms of assembly, interacts with Skb1.

Its subcellular location is the cell membrane. Functionally, acts as a membrane anchor for Skb1 in forming plasma membrane microdomains. Promotes mitotic entry by sequestering mitotic inhibitor Skb1 from its regulatory targets Cdr1 and Wee1. In Schizosaccharomyces pombe (strain 972 / ATCC 24843) (Fission yeast), this protein is Skb1 localization factor 1.